A 212-amino-acid polypeptide reads, in one-letter code: Protein DEPP1 (212 aa).

Disordered stretches follow at residues 20–39 (EEML…SLDD), 49–79 (QPTS…GRPA), and 113–176 (QEKQ…SDLR). The span at 113-124 (QEKQPSQRDLPR) shows a compositional bias: basic and acidic residues.

Expressed in various tissues, including pancreas, placenta, ovary, testis and kidney.

The protein resides in the cytoplasm. It localises to the peroxisome. It is found in the mitochondrion. Its function is as follows. Acts as a critical modulator of FOXO3-induced autophagy via increased cellular ROS. This is Protein DEPP1 from Homo sapiens (Human).